The sequence spans 144 residues: Large ribosomal subunit protein uL13 (144 aa).

It belongs to the universal ribosomal protein uL13 family. As to quaternary structure, part of the 50S ribosomal subunit.

Its function is as follows. This protein is one of the early assembly proteins of the 50S ribosomal subunit, although it is not seen to bind rRNA by itself. It is important during the early stages of 50S assembly. The chain is Large ribosomal subunit protein uL13 from Clostridium botulinum (strain Alaska E43 / Type E3).